A 167-amino-acid polypeptide reads, in one-letter code: uncharacterized protein (167 aa).

Belongs to the A.longa ORF167/ORF288 family.

The protein resides in the plastid. This is an uncharacterized protein from Euglena longa (Euglenophycean alga).